Here is a 153-residue protein sequence, read N- to C-terminus: uncharacterized protein (153 aa).

The signal sequence occupies residues 1–21 (MKITITSLLFFLVMIVELASA).

This is an uncharacterized protein from Saccharomyces cerevisiae (strain ATCC 204508 / S288c) (Baker's yeast).